Here is a 400-residue protein sequence, read N- to C-terminus: tRNA-specific adenosine deaminase TAD3 (400 aa).

A CMP/dCMP-type deaminase domain is found at 250–385 (SQWHPLRHAS…KSLNHHYAVF (136 aa)). Residue H257 coordinates Zn(2+). Residues 273–320 (LFPNPSKIFDQDHVPPSNTDSPAKKQKTSSQSPDVQNDSREETVRDPS) are disordered. Positions 309 to 320 (NDSREETVRDPS) are enriched in basic and acidic residues. Positions 339 and 342 each coordinate Zn(2+).

It belongs to the cytidine and deoxycytidylate deaminase family. ADAT3 subfamily. Interacts with TAD2.

It localises to the nucleus. Its subcellular location is the cytoplasm. The enzyme catalyses adenosine(34) in tRNA + H2O + H(+) = inosine(34) in tRNA + NH4(+). Its function is as follows. Involved in RNA editing. Catalyzes the specific deamination of adenosine-34 in several cytosolic tRNA species. Generates inosine at the wobble position of the anticodon loop. The chain is tRNA-specific adenosine deaminase TAD3 from Arabidopsis thaliana (Mouse-ear cress).